Reading from the N-terminus, the 232-residue chain is Small ribosomal subunit protein uS3 (232 aa).

Positions 39–107 (IREILHKELK…DVVINIVEIR (69 aa)) constitute a KH type-2 domain.

The protein belongs to the universal ribosomal protein uS3 family. In terms of assembly, part of the 30S ribosomal subunit. Forms a tight complex with proteins S10 and S14.

Its function is as follows. Binds the lower part of the 30S subunit head. Binds mRNA in the 70S ribosome, positioning it for translation. The polypeptide is Small ribosomal subunit protein uS3 (Rhodopseudomonas palustris (strain HaA2)).